Here is a 265-residue protein sequence, read N- to C-terminus: Small ribosomal subunit protein uS2 (265 aa).

Residues 226–265 are disordered; it reads AAAPNSASVREEEFSAESADEGKGRRAPAKKGDKKADAAE. The span at 245–265 shows a compositional bias: basic and acidic residues; it reads DEGKGRRAPAKKGDKKADAAE.

This sequence belongs to the universal ribosomal protein uS2 family.

This chain is Small ribosomal subunit protein uS2, found in Xanthomonas euvesicatoria pv. vesicatoria (strain 85-10) (Xanthomonas campestris pv. vesicatoria).